Reading from the N-terminus, the 230-residue chain is Protein FAM3A (230 aa).

The first 33 residues, 1–33 (MRLAGPLRIVVLVVSVGVTWIVVSILLGGPGSG), serve as a signal peptide directing secretion. Cystine bridges form between C59–C87 and C65–C222. Positions 68–226 (EHLAFRVVSG…LEMEGCIPRR (159 aa)) constitute a GG-type lectin domain.

The protein belongs to the FAM3 family. In terms of tissue distribution, in similar amounts in testis, pancreas, adrenal, placenta, brain, fetal brain, liver, kidney, skeletal muscle and heart.

Its subcellular location is the secreted. May act as a defensin against invading fungal microorganisms. The polypeptide is Protein FAM3A (FAM3A) (Homo sapiens (Human)).